Reading from the N-terminus, the 355-residue chain is UDP-N-acetylglucosamine--N-acetylmuramyl-(pentapeptide) pyrophosphoryl-undecaprenol N-acetylglucosamine transferase (355 aa).

Residues 15 to 17, asparagine 127, arginine 163, serine 191, isoleucine 244, 263 to 268, and glutamine 288 each bind UDP-N-acetyl-alpha-D-glucosamine; these read TGG and ALTVSE.

The protein belongs to the glycosyltransferase 28 family. MurG subfamily.

It is found in the cell inner membrane. The enzyme catalyses di-trans,octa-cis-undecaprenyl diphospho-N-acetyl-alpha-D-muramoyl-L-alanyl-D-glutamyl-meso-2,6-diaminopimeloyl-D-alanyl-D-alanine + UDP-N-acetyl-alpha-D-glucosamine = di-trans,octa-cis-undecaprenyl diphospho-[N-acetyl-alpha-D-glucosaminyl-(1-&gt;4)]-N-acetyl-alpha-D-muramoyl-L-alanyl-D-glutamyl-meso-2,6-diaminopimeloyl-D-alanyl-D-alanine + UDP + H(+). It functions in the pathway cell wall biogenesis; peptidoglycan biosynthesis. Cell wall formation. Catalyzes the transfer of a GlcNAc subunit on undecaprenyl-pyrophosphoryl-MurNAc-pentapeptide (lipid intermediate I) to form undecaprenyl-pyrophosphoryl-MurNAc-(pentapeptide)GlcNAc (lipid intermediate II). This chain is UDP-N-acetylglucosamine--N-acetylmuramyl-(pentapeptide) pyrophosphoryl-undecaprenol N-acetylglucosamine transferase, found in Shigella flexneri serotype 5b (strain 8401).